A 310-amino-acid chain; its full sequence is Thioredoxin reductase (310 aa).

34–41 serves as a coordination point for FAD; that stretch reads NGMQPGGQ. An intrachain disulfide couples cysteine 135 to cysteine 138. Residue 281–290 coordinates FAD; that stretch reads DVQDKIYRQA.

The protein belongs to the class-II pyridine nucleotide-disulfide oxidoreductase family. Homodimer. It depends on FAD as a cofactor.

The protein resides in the cytoplasm. It catalyses the reaction [thioredoxin]-dithiol + NADP(+) = [thioredoxin]-disulfide + NADPH + H(+). This Rickettsia felis (strain ATCC VR-1525 / URRWXCal2) (Rickettsia azadi) protein is Thioredoxin reductase (trxB).